The sequence spans 125 residues: Small ribosomal subunit protein uS11m (125 aa).

The protein belongs to the universal ribosomal protein uS11 family.

It is found in the mitochondrion. The sequence is that of Small ribosomal subunit protein uS11m (RPS11) from Marchantia polymorpha (Common liverwort).